A 547-amino-acid chain; its full sequence is ATP synthase subunit alpha (547 aa).

Position 173-180 (173-180 (GDRQTGKT)) interacts with ATP.

This sequence belongs to the ATPase alpha/beta chains family. F-type ATPases have 2 components, CF(1) - the catalytic core - and CF(0) - the membrane proton channel. CF(1) has five subunits: alpha(3), beta(3), gamma(1), delta(1), epsilon(1). CF(0) has three main subunits: a(1), b(2) and c(9-12). The alpha and beta chains form an alternating ring which encloses part of the gamma chain. CF(1) is attached to CF(0) by a central stalk formed by the gamma and epsilon chains, while a peripheral stalk is formed by the delta and b chains.

It is found in the cell membrane. The enzyme catalyses ATP + H2O + 4 H(+)(in) = ADP + phosphate + 5 H(+)(out). In terms of biological role, produces ATP from ADP in the presence of a proton gradient across the membrane. The alpha chain is a regulatory subunit. The chain is ATP synthase subunit alpha from Thermobifida fusca (strain YX).